Consider the following 55-residue polypeptide: ATP synthase F(0) complex subunit 8 (55 aa).

Residues 4 to 24 traverse the membrane as a helical segment; the sequence is LNPAPWFAILVFSWLVFLTVI. The interval 34–55 is disordered; it reads TNEPTSQSTEKAKPEPWNWPWH.

It belongs to the ATPase protein 8 family. As to quaternary structure, component of the ATP synthase complex composed at least of ATP5F1A/subunit alpha, ATP5F1B/subunit beta, ATP5MC1/subunit c (homooctomer), MT-ATP6/subunit a, MT-ATP8/subunit 8, ATP5ME/subunit e, ATP5MF/subunit f, ATP5MG/subunit g, ATP5MK/subunit k, ATP5MJ/subunit j, ATP5F1C/subunit gamma, ATP5F1D/subunit delta, ATP5F1E/subunit epsilon, ATP5PF/subunit F6, ATP5PB/subunit b, ATP5PD/subunit d, ATP5PO/subunit OSCP. ATP synthase complex consists of a soluble F(1) head domain (subunits alpha(3) and beta(3)) - the catalytic core - and a membrane F(0) domain - the membrane proton channel (subunits c, a, 8, e, f, g, k and j). These two domains are linked by a central stalk (subunits gamma, delta, and epsilon) rotating inside the F1 region and a stationary peripheral stalk (subunits F6, b, d, and OSCP).

It is found in the mitochondrion membrane. Functionally, subunit 8, of the mitochondrial membrane ATP synthase complex (F(1)F(0) ATP synthase or Complex V) that produces ATP from ADP in the presence of a proton gradient across the membrane which is generated by electron transport complexes of the respiratory chain. ATP synthase complex consist of a soluble F(1) head domain - the catalytic core - and a membrane F(1) domain - the membrane proton channel. These two domains are linked by a central stalk rotating inside the F(1) region and a stationary peripheral stalk. During catalysis, ATP synthesis in the catalytic domain of F(1) is coupled via a rotary mechanism of the central stalk subunits to proton translocation. In vivo, can only synthesize ATP although its ATP hydrolase activity can be activated artificially in vitro. Part of the complex F(0) domain. This chain is ATP synthase F(0) complex subunit 8, found in Oncorhynchus mykiss (Rainbow trout).